The chain runs to 275 residues: 3-oxo-isoapionate decarboxylase (275 aa).

The catalysed reaction is 3-oxoisoapionate + H(+) = L-erythrulose + CO2. It functions in the pathway carbohydrate metabolism. Involved in catabolism of D-apiose. Catalyzes decarboxylation of 3-oxo-isoapionate to L-erythrulose. This Pectobacterium atrosepticum (strain SCRI 1043 / ATCC BAA-672) (Erwinia carotovora subsp. atroseptica) protein is 3-oxo-isoapionate decarboxylase.